We begin with the raw amino-acid sequence, 276 residues long: ARL14 effector protein (276 aa).

Residues 159 to 183 are disordered; the sequence is QTEFAPESGKREKRKLTKNASASSD. K176 is covalently cross-linked (Glycyl lysine isopeptide (Lys-Gly) (interchain with G-Cter in SUMO2)). Phosphoserine occurs at positions 182 and 266.

In terms of assembly, interacts with ARL14 and MYO1E.

It localises to the cytoplasm. Through its interaction with ARL14 and MYO1E, may connect MHC class II-containing cytoplasmic vesicles to the actin network and hence controls the movement of these vesicles along the actin cytoskeleton in dendritic cells. The chain is ARL14 effector protein (Arl14ep) from Rattus norvegicus (Rat).